A 478-amino-acid polypeptide reads, in one-letter code: MNSAVEQQLAELGIEAYLKEHQYKSLLRFLTCGSVDDGKSTLIGRLLHDSKQIYADQLDAVHADSQRVGTTGERPDLALLVDGLQAEREQGITIDVAYRYFSTQKRKFIIADTPGHEQYTRNMATGASTCNVAVILIDARKGVLDQTRRHSYIANLLGIRHFIVAVNKMDLVEYSQSRFEEIKEEYLAFSKKLNNPNLDISILPLSALEGDNVVNPSEALSWYQGEPLLEVLENVDIDADKGNGEFRFPVQYVNRPNLDFRGFAGTVSSGGISVGDEIVALPSGKKSKVARIVTFDGDLTSAQAGQAVTLTLEDEIDISRGDLLVKSQSNLQATDQFKAEIVWMTEKGLEPGRQYDIKIAGKKTVGQIDAIHHQVNINSLEKFDTQELPLNGIGLCDVSLTETVSLDRYQDCADTGGFIFIDRLTNVTVGAGMIQNLSDLSETKPINDNISAFEIELNALIRKHFPHWETQDISKLLG.

The region spanning 24-240 is the tr-type G domain; the sequence is KSLLRFLTCG…VLENVDIDAD (217 aa). A G1 region spans residues 33–40; that stretch reads GSVDDGKS. 33–40 is a GTP binding site; that stretch reads GSVDDGKS. Positions 91–95 are G2; the sequence is GITID. Residues 112-115 form a G3 region; it reads DTPG. GTP-binding positions include 112 to 116 and 167 to 170; these read DTPGH and NKMD. The interval 167 to 170 is G4; it reads NKMD. A G5 region spans residues 206-208; it reads SAL.

Belongs to the TRAFAC class translation factor GTPase superfamily. Classic translation factor GTPase family. CysN/NodQ subfamily. In terms of assembly, heterodimer composed of CysD, the smaller subunit, and CysN.

The catalysed reaction is sulfate + ATP + H(+) = adenosine 5'-phosphosulfate + diphosphate. Its pathway is sulfur metabolism; hydrogen sulfide biosynthesis; sulfite from sulfate: step 1/3. Functionally, with CysD forms the ATP sulfurylase (ATPS) that catalyzes the adenylation of sulfate producing adenosine 5'-phosphosulfate (APS) and diphosphate, the first enzymatic step in sulfur assimilation pathway. APS synthesis involves the formation of a high-energy phosphoric-sulfuric acid anhydride bond driven by GTP hydrolysis by CysN coupled to ATP hydrolysis by CysD. This is Sulfate adenylyltransferase subunit 1 from Aliivibrio fischeri (strain MJ11) (Vibrio fischeri).